The chain runs to 84 residues: UPF0386 protein R01313 (84 aa).

Belongs to the UPF0386 family.

This chain is UPF0386 protein R01313, found in Rhizobium meliloti (strain 1021) (Ensifer meliloti).